Here is a 299-residue protein sequence, read N- to C-terminus: Sulfate adenylyltransferase subunit 2 (299 aa).

The disordered stretch occupies residues 276-299 (EREGRVIDHDSAGSMEKKKREGYF).

Belongs to the PAPS reductase family. CysD subfamily. Heterodimer composed of CysD, the smaller subunit, and CysN.

The catalysed reaction is sulfate + ATP + H(+) = adenosine 5'-phosphosulfate + diphosphate. Its pathway is sulfur metabolism; hydrogen sulfide biosynthesis; sulfite from sulfate: step 1/3. Functionally, with CysN forms the ATP sulfurylase (ATPS) that catalyzes the adenylation of sulfate producing adenosine 5'-phosphosulfate (APS) and diphosphate, the first enzymatic step in sulfur assimilation pathway. APS synthesis involves the formation of a high-energy phosphoric-sulfuric acid anhydride bond driven by GTP hydrolysis by CysN coupled to ATP hydrolysis by CysD. This chain is Sulfate adenylyltransferase subunit 2, found in Pseudoalteromonas translucida (strain TAC 125).